Consider the following 233-residue polypeptide: Uracil-DNA glycosylase (233 aa).

The active-site Proton acceptor is D70.

It belongs to the uracil-DNA glycosylase (UDG) superfamily. UNG family.

It is found in the cytoplasm. It catalyses the reaction Hydrolyzes single-stranded DNA or mismatched double-stranded DNA and polynucleotides, releasing free uracil.. Its function is as follows. Excises uracil residues from the DNA which can arise as a result of misincorporation of dUMP residues by DNA polymerase or due to deamination of cytosine. The chain is Uracil-DNA glycosylase from Helicobacter pylori (strain HPAG1).